Here is a 664-residue protein sequence, read N- to C-terminus: CRISPR-associated DNA-binding protein Cas12m (664 aa).

Residues 1-137 (MKRVTITIDG…AKYRELIGSD (137 aa)) are recognition domain (REC1-N). The segment at 138–212 (EETAQMDTEI…AAKDRIRAAG (75 aa)) is recognition domain (REC2). Residues 213 to 270 (NDIENLEKDRQAAVIKAYNNSGLWWGNYNAVLESYKKARIKALKDGAELKYHRFDGSG) are recognition domain (REC1-C). Residues 271-390 (RFTNQIQGGM…VWSVVFTFTT (120 aa)) are wedge domain (WED). The linker stretch occupies residues 391–404 (DCPTYDQRSSTGNR). Positions 405 to 618 (CGLNLGWKKQ…KNGTQIEQVS (214 aa)) are ruvC-I. A target nucleic-acid binding (TNB) region spans residues 618–650 (STASSATCSACKGKMEQVDGIMWRCRECRALVD). Cys-625, Cys-628, Cys-642, and Cys-645 together coordinate Zn(2+). The ruvC-II stretch occupies residues 651–664 (QDINAAANLFREVL). Mg(2+) is bound at residue Asp-652.

This sequence belongs to the CRISPR-associated DNA-binding protein Cas12m family. The cofactor is Mg(2+). It depends on Zn(2+) as a cofactor.

Functionally, CRISPR (clustered regularly interspaced short palindromic repeat), is an adaptive immune system that provides protection against mobile genetic elements (viruses, transposable elements and conjugative plasmids). CRISPR clusters contain sequences complementary to antecedent mobile elements and target invading nucleic acids. CRISPR clusters are transcribed and processed into CRISPR RNA (crRNA). Recognizes a short motif in the CRISPR repeat sequences (the 5' PAM or protospacer adjacent motif, 5'-CCN-3' in this organism) to help distinguish self versus nonself, as targets within the bacterial CRISPR locus do not have PAMs. Cas12m-crRNA binds DNA in a PAM-dependent, crRNA-guided fashion. DNA-binding probably inhibits transcription, leading to gene silencing. Upon expression in E.coli as a CRISPR region preferentially binds to its associated crRNA. Probably required for pre-crRNA processing to mature crRNA. The sequence is that of CRISPR-associated DNA-binding protein Cas12m from Pelobacter propionicus (strain DSM 2379 / NBRC 103807 / OttBd1).